The primary structure comprises 322 residues: ADP,ATP carrier protein (322 aa).

Solcar repeat units follow at residues 25-118 (STFF…FKKM), 130-222 (KWFA…LKPV), and 230-316 (GNFL…VQLL). 5 helical membrane-spanning segments follow: residues 27-54 (FFFD…VKLL), 95-119 (TANV…KKMF), 128-148 (YAKW…ASLL), 198-219 (FGPS…YDTL), and 233-253 (LASF…SYPL). ADP-binding residues include Arg-100 and Lys-112. Arg-257 lines the ADP pocket. The interval 257-262 (RRRMMM) is important for transport activity. Positions 257 to 262 (RRRMMM) match the Nucleotide carrier signature motif motif. The helical transmembrane segment at 293–313 (AGANILRGVAGAGVLSIYDQV) threads the bilayer.

Belongs to the mitochondrial carrier (TC 2.A.29) family. Monomer.

It is found in the mitochondrion inner membrane. The catalysed reaction is ADP(in) + ATP(out) = ADP(out) + ATP(in). With respect to regulation, the matrix-open state (m-state) is inhibited by the membrane-permeable bongkrekic acid (BKA). The cytoplasmic-open state (c-state) is inhibited by the membrane-impermeable toxic inhibitor carboxyatractyloside (CATR). ADP:ATP antiporter that mediates import of ADP into the mitochondrial matrix for ATP synthesis, and export of ATP out to fuel the cell. Cycles between the cytoplasmic-open state (c-state) and the matrix-open state (m-state): operates by the alternating access mechanism with a single substrate-binding site intermittently exposed to either the cytosolic (c-state) or matrix (m-state) side of the inner mitochondrial membrane. In Schizosaccharomyces pombe (strain 972 / ATCC 24843) (Fission yeast), this protein is ADP,ATP carrier protein (anc1).